A 441-amino-acid chain; its full sequence is tRNA modification GTPase MnmE (441 aa).

The (6S)-5-formyl-5,6,7,8-tetrahydrofolate site is built by R23, E81, and K121. The 146-residue stretch at 218 to 363 (GFRVAIVGPP…LESWIAAFVS (146 aa)) folds into the TrmE-type G domain. N228 is a binding site for K(+). Residues 228 to 233 (NAGKSS), 247 to 253 (TDIAGTT), 272 to 275 (DTAG), and 326 to 329 (NKAD) contribute to the GTP site. S232 contributes to the Mg(2+) binding site. Residues T247, I249, and T252 each contribute to the K(+) site. Position 253 (T253) interacts with Mg(2+). K441 lines the (6S)-5-formyl-5,6,7,8-tetrahydrofolate pocket.

Belongs to the TRAFAC class TrmE-Era-EngA-EngB-Septin-like GTPase superfamily. TrmE GTPase family. Homodimer. Heterotetramer of two MnmE and two MnmG subunits. K(+) is required as a cofactor.

The protein localises to the cytoplasm. Functionally, exhibits a very high intrinsic GTPase hydrolysis rate. Involved in the addition of a carboxymethylaminomethyl (cmnm) group at the wobble position (U34) of certain tRNAs, forming tRNA-cmnm(5)s(2)U34. The sequence is that of tRNA modification GTPase MnmE from Hyphomonas neptunium (strain ATCC 15444).